The following is a 78-amino-acid chain: Large ribosomal subunit protein bL28 (78 aa).

This sequence belongs to the bacterial ribosomal protein bL28 family.

This is Large ribosomal subunit protein bL28 from Nostoc sp. (strain PCC 7120 / SAG 25.82 / UTEX 2576).